We begin with the raw amino-acid sequence, 631 residues long: Dolichyl-diphosphooligosaccharide--protein glycosyltransferase subunit 2 (631 aa).

Residues 1-22 (MASPGASTVFLLALTILAGTQA) form the signal peptide. Residues 23–540 (LTPTHYLTKP…REPEKRPPTV (518 aa)) lie on the Lumenal side of the membrane. N106 carries N-linked (GlcNAc...) asparagine glycosylation. K154 is covalently cross-linked (Glycyl lysine isopeptide (Lys-Gly) (interchain with G-Cter in ubiquitin)). Residues 541-561 (VSNTFTALILSPLLLLFALWI) form a helical membrane-spanning segment. Topologically, residues 562–571 (RIGANVSNFT) are cytoplasmic. The chain crosses the membrane as a helical span at residues 572–592 (FAPSTIIFHLGHAAMLGLMYV). Over 593 to 596 (YWTQ) the chain is Lumenal. A helical transmembrane segment spans residues 597 to 617 (LNMFQTLKYLAILGSVTFLAG). The Cytoplasmic segment spans residues 618–631 (NRMLAQQAIKRTAH).

It belongs to the SWP1 family. As to quaternary structure, component of the oligosaccharyltransferase (OST) complex. OST exists in two different complex forms which contain common core subunits RPN1, RPN2, OST48, OST4, DAD1 and TMEM258, either STT3A or STT3B as catalytic subunits, and form-specific accessory subunits. STT3A complex assembly occurs through the formation of 3 subcomplexes. Subcomplex 1 contains RPN1 and TMEM258, subcomplex 2 contains the STT3A-specific subunits STT3A, DC2/OSTC, and KCP2 as well as the core subunit OST4, and subcomplex 3 contains RPN2, DAD1, and OST48. The STT3A complex can form stable complexes with the Sec61 complex or with both the Sec61 and TRAP complexes. Interacts with DDI2. Interacts with TMEM35A/NACHO.

Its subcellular location is the endoplasmic reticulum. The protein resides in the endoplasmic reticulum membrane. It participates in protein modification; protein glycosylation. In terms of biological role, subunit of the oligosaccharyl transferase (OST) complex that catalyzes the initial transfer of a defined glycan (Glc(3)Man(9)GlcNAc(2) in eukaryotes) from the lipid carrier dolichol-pyrophosphate to an asparagine residue within an Asn-X-Ser/Thr consensus motif in nascent polypeptide chains, the first step in protein N-glycosylation. N-glycosylation occurs cotranslationally and the complex associates with the Sec61 complex at the channel-forming translocon complex that mediates protein translocation across the endoplasmic reticulum (ER). All subunits are required for a maximal enzyme activity. The polypeptide is Dolichyl-diphosphooligosaccharide--protein glycosyltransferase subunit 2 (Canis lupus familiaris (Dog)).